A 107-amino-acid polypeptide reads, in one-letter code: Large ribosomal subunit protein P1 (107 aa).

Over residues 68–82 the composition is skewed to low complexity; it reads PATAGAPAAAGAAAP. Residues 68 to 107 are disordered; the sequence is PATAGAPAAAGAAAPAEEKKEEKEEEKEESDEDMGFGLFD. Residues 90 to 101 show a composition bias toward acidic residues; sequence KEEEKEESDEDM.

The protein belongs to the eukaryotic ribosomal protein P1/P2 family. P1 and P2 exist as dimers at the large ribosomal subunit.

It localises to the cytoplasm. Functionally, plays an important role in the elongation step of protein synthesis. The sequence is that of Large ribosomal subunit protein P1 from Penicillium brevicompactum.